Here is a 270-residue protein sequence, read N- to C-terminus: Phosphonoacetaldehyde hydrolase (270 aa).

Residue aspartate 11 is the Nucleophile of the active site. 2 residues coordinate Mg(2+): aspartate 11 and alanine 13. The active-site Schiff-base intermediate with substrate is the lysine 53. A Mg(2+)-binding site is contributed by aspartate 187.

This sequence belongs to the HAD-like hydrolase superfamily. PhnX family. In terms of assembly, homodimer. Requires Mg(2+) as cofactor.

It catalyses the reaction phosphonoacetaldehyde + H2O = acetaldehyde + phosphate + H(+). In terms of biological role, involved in phosphonate degradation. The sequence is that of Phosphonoacetaldehyde hydrolase from Salmonella paratyphi C (strain RKS4594).